A 197-amino-acid chain; its full sequence is Transmembrane 4 L6 family member 5 (197 aa).

Residues 1-9 are Cytoplasmic-facing; sequence MCTGKCARC. A helical membrane pass occupies residues 10 to 30; it reads VGLSLITLCLVCIVANALLLV. The Extracellular segment spans residues 31–46; the sequence is PNGETSWTNTNHLSLQ. The chain crosses the membrane as a helical span at residues 47 to 67; the sequence is VWLMGGFIGGGLMVLCPGIAA. Residues 68 to 90 are Cytoplasmic-facing; sequence VRAGGKGCCGAGCCGNRCRMLRS. Residues 91-111 form a helical membrane-spanning segment; it reads VFSSAFGVLGAIYCLSVSGAG. Positions 91–197 are interaction with MTOR and CASTOR1; it reads VFSSAFGVLG…DCRKKQDTPH (107 aa). Topologically, residues 112-157 are extracellular; it reads LRNGPRCLMNGEWGYHFEDTAGAYLLNRTLWDRCEAPPRVVPWNVT. 124 to 129 is an L-arginine binding site; it reads WGYHFE. Residues Asn-138 and Asn-155 are each glycosylated (N-linked (GlcNAc...) asparagine). The helical transmembrane segment at 158-178 threads the bilayer; sequence LFSLLVAASCLEIVLCGIQLV. The Cytoplasmic portion of the chain corresponds to 179–197; the sequence is NATIGVFCGDCRKKQDTPH.

The protein belongs to the L6 tetraspanin family. Interacts with MTOR; the interaction is positively regulated by arginine and is negatively regulated by leucine. Interacts with SLC38A9. Interacts with SLC7A1; the interaction is negatively regulated by arginine. Interacts with CASTOR1; the interaction is positively regulated by leucine and is negatively regulated by arginine. As to expression, intestine. Overexpressed in pancreatic cancers.

It is found in the lysosome membrane. The protein localises to the cell membrane. Acts as a lysosomal membrane arginine sensor. Forms a complex with MTOR and SLC38A9 on lysosomal membranes in an arginine-regulated manner, leading to arginine efflux which enables the activation of mTORC1 which subsequently leads to RPS6KB1 and EIF4EBP1 phosphorylations. Facilitates cell cycle G1/S phase progression and the translocation of the CDK4-CCND1 complex into the nucleus. CDKN1B and RHOA/ROCK signaling activity are involved in TM4SF5-mediated acceleration of G1/S phase progression. The sequence is that of Transmembrane 4 L6 family member 5 (TM4SF5) from Homo sapiens (Human).